The following is an 86-amino-acid chain: Small ribosomal subunit protein uS15 (86 aa).

The disordered stretch occupies residues 1–22 (MSVDTQKVIEDNKRSAQDTGSP). Basic and acidic residues predominate over residues 7 to 16 (KVIEDNKRSA).

Belongs to the universal ribosomal protein uS15 family. Part of the 30S ribosomal subunit. Forms a bridge to the 50S subunit in the 70S ribosome, contacting the 23S rRNA.

Its function is as follows. One of the primary rRNA binding proteins, it binds directly to 16S rRNA where it helps nucleate assembly of the platform of the 30S subunit by binding and bridging several RNA helices of the 16S rRNA. Forms an intersubunit bridge (bridge B4) with the 23S rRNA of the 50S subunit in the ribosome. The sequence is that of Small ribosomal subunit protein uS15 from Xanthomonas campestris pv. campestris (strain 8004).